The sequence spans 734 residues: Ribosomal RNA large subunit methyltransferase K/L (734 aa).

One can recognise a THUMP domain in the interval 49-167; that stretch reads HAYRICMWSR…KTEHTYCLDL (119 aa).

Belongs to the methyltransferase superfamily. RlmKL family.

The protein resides in the cytoplasm. It catalyses the reaction guanosine(2445) in 23S rRNA + S-adenosyl-L-methionine = N(2)-methylguanosine(2445) in 23S rRNA + S-adenosyl-L-homocysteine + H(+). The catalysed reaction is guanosine(2069) in 23S rRNA + S-adenosyl-L-methionine = N(2)-methylguanosine(2069) in 23S rRNA + S-adenosyl-L-homocysteine + H(+). Functionally, specifically methylates the guanine in position 2445 (m2G2445) and the guanine in position 2069 (m7G2069) of 23S rRNA. This is Ribosomal RNA large subunit methyltransferase K/L from Acinetobacter baumannii (strain AYE).